Here is a 611-residue protein sequence, read N- to C-terminus: Alpha-1,2-mannosyltransferase ALG9 (611 aa).

Over residues 1–10 (MASRGARQRL) the composition is skewed to basic residues. The interval 1-23 (MASRGARQRLKGSGASSGDTAPA) is disordered. Residues 1 to 135 (MASRGARQRL…FHARILQTNK (135 aa)) lie on the Lumenal side of the membrane. Residue N77 is glycosylated (N-linked (GlcNAc...) asparagine). A helical membrane pass occupies residues 136–156 (ILVFYFLRCLLAFVSCICELY). Residues 157 to 171 (FYKAVCKKFGLHVSR) are Cytoplasmic-facing. Residues 172–192 (MMLAFLVLSTGMFCSSSAFLP) traverse the membrane as a helical segment. Over 193–213 (SSFCMYTTLIAMTGWYMDKTS) the chain is Lumenal. The chain crosses the membrane as a helical span at residues 214–234 (IAVLGVAAGAILGWPFSAALG). Residues 235-249 (LPIAFDLLVMKHRWK) are Cytoplasmic-facing. The helical transmembrane segment at 250–270 (SFFHWSLMALILFLVPVVVID) threads the bilayer. Residues 271-304 (SYYYGKLVIAPLNIVLYNVFTPHGPDLYGTEPWY) are Lumenal-facing. The helical transmembrane segment at 305–325 (FYLINGFLNFNVAFALALLVL) threads the bilayer. The Cytoplasmic segment spans residues 326-342 (PLTSLMEYLLQRFHVQN). The helical transmembrane segment at 343–363 (LGHPYWLTLAPMYIWFIIFFI) threads the bilayer. Over 364–370 (QPHKEER) the chain is Lumenal. Residues 371–391 (FLFPVYPLICLCGAVALSALQ) traverse the membrane as a helical segment. Residues 392–405 (KCYHFVFQRYRLEH) are Cytoplasmic-facing. Residues 406–426 (YTVTSNWLALGTVFLFGLLSF) traverse the membrane as a helical segment. Topologically, residues 427-611 (SRSVALFRGY…AKQIRKKSGG (185 aa)) are lumenal. N593 carries an N-linked (GlcNAc...) asparagine glycan.

It belongs to the glycosyltransferase 22 family. In terms of tissue distribution, ubiquitously expressed; with highest levels in heart, liver and pancreas.

Its subcellular location is the endoplasmic reticulum membrane. The enzyme catalyses an alpha-D-Man-(1-&gt;2)-alpha-D-Man-(1-&gt;2)-alpha-D-Man-(1-&gt;3)-[alpha-D-Man-(1-&gt;3)-alpha-D-Man-(1-&gt;6)]-beta-D-Man-(1-&gt;4)-beta-D-GlcNAc-(1-&gt;4)-alpha-D-GlcNAc-diphospho-di-trans,poly-cis-dolichol + a di-trans,poly-cis-dolichyl beta-D-mannosyl phosphate = an alpha-D-Man-(1-&gt;2)-alpha-D-Man-(1-&gt;2)-alpha-D-Man-(1-&gt;3)-[alpha-D-Man-(1-&gt;2)-alpha-D-Man-(1-&gt;3)-alpha-D-Man-(1-&gt;6)]-beta-D-Man-(1-&gt;4)-beta-D-GlcNAc-(1-&gt;4)-alpha-D-GlcNAc-diphospho-di-trans,poly-cis-dolichol + a di-trans,poly-cis-dolichyl phosphate + H(+). The catalysed reaction is an alpha-D-Man-(1-&gt;2)-alpha-D-Man-(1-&gt;2)-alpha-D-Man-(1-&gt;3)-[alpha-D-Man-(1-&gt;2)-alpha-D-Man-(1-&gt;3)-[alpha-D-Man-(1-&gt;6)]-alpha-D-Man-(1-&gt;6)]-beta-D-Man-(1-&gt;4)-beta-D-GlcNAc-(1-&gt;4)-alpha-D-GlcNAc-diphospho-di-trans,poly-cis-dolichol + a di-trans,poly-cis-dolichyl beta-D-mannosyl phosphate = an alpha-D-Man-(1-&gt;2)-alpha-D-Man-(1-&gt;2)-alpha-D-Man-(1-&gt;3)-[alpha-D-Man-(1-&gt;2)-alpha-D-Man-(1-&gt;3)-[alpha-D-Man-(1-&gt;2)-alpha-D-Man-(1-&gt;6)]-alpha-D-Man-(1-&gt;6)]-beta-D-Man-(1-&gt;4)-beta-D-GlcNAc-(1-&gt;4)-alpha-D-GlcNAc-diphospho-di-trans,poly-cis-dolichol + a di-trans,poly-cis-dolichyl phosphate + H(+). It participates in protein modification; protein glycosylation. Functionally, mannosyltransferase that operates in the biosynthetic pathway of dolichol-linked oligosaccharides, the glycan precursors employed in protein asparagine (N)-glycosylation. The assembly of dolichol-linked oligosaccharides begins on the cytosolic side of the endoplasmic reticulum membrane and finishes in its lumen. The sequential addition of sugars to dolichol pyrophosphate produces dolichol-linked oligosaccharides containing fourteen sugars, including two GlcNAcs, nine mannoses and three glucoses. Once assembled, the oligosaccharide is transferred from the lipid to nascent proteins by oligosaccharyltransferases. In the lumen of the endoplasmic reticulum, catalyzes the addition of the seventh and ninth alpha-1,2-linked mannose residues to Man(6)GlcNAc(2)-PP-dolichol and Man(8)GlcNAc(2)-PP-dolichol respectively. The polypeptide is Alpha-1,2-mannosyltransferase ALG9 (Homo sapiens (Human)).